Reading from the N-terminus, the 290-residue chain is Acetyl-coenzyme A carboxylase carboxyl transferase subunit beta (290 aa).

One can recognise a CoA carboxyltransferase N-terminal domain in the interval Leu-27–Ala-290. Positions 31, 34, 50, and 53 each coordinate Zn(2+). Residues Cys-31–Cys-53 form a C4-type zinc finger.

This sequence belongs to the AccD/PCCB family. In terms of assembly, acetyl-CoA carboxylase is a heterohexamer composed of biotin carboxyl carrier protein (AccB), biotin carboxylase (AccC) and two subunits each of ACCase subunit alpha (AccA) and ACCase subunit beta (AccD). It depends on Zn(2+) as a cofactor.

It localises to the cytoplasm. The catalysed reaction is N(6)-carboxybiotinyl-L-lysyl-[protein] + acetyl-CoA = N(6)-biotinyl-L-lysyl-[protein] + malonyl-CoA. It functions in the pathway lipid metabolism; malonyl-CoA biosynthesis; malonyl-CoA from acetyl-CoA: step 1/1. Functionally, component of the acetyl coenzyme A carboxylase (ACC) complex. Biotin carboxylase (BC) catalyzes the carboxylation of biotin on its carrier protein (BCCP) and then the CO(2) group is transferred by the transcarboxylase to acetyl-CoA to form malonyl-CoA. In Paraburkholderia phymatum (strain DSM 17167 / CIP 108236 / LMG 21445 / STM815) (Burkholderia phymatum), this protein is Acetyl-coenzyme A carboxylase carboxyl transferase subunit beta.